A 172-amino-acid polypeptide reads, in one-letter code: Adenine phosphoribosyltransferase (172 aa).

The protein belongs to the purine/pyrimidine phosphoribosyltransferase family. In terms of assembly, homodimer.

Its subcellular location is the cytoplasm. It catalyses the reaction AMP + diphosphate = 5-phospho-alpha-D-ribose 1-diphosphate + adenine. The protein operates within purine metabolism; AMP biosynthesis via salvage pathway; AMP from adenine: step 1/1. Functionally, catalyzes a salvage reaction resulting in the formation of AMP, that is energically less costly than de novo synthesis. The sequence is that of Adenine phosphoribosyltransferase from Streptococcus equi subsp. zooepidemicus (strain H70).